The primary structure comprises 459 residues: Cyclooctat-9-en-7-ol 5-monooxygenase (459 aa).

The disordered stretch occupies residues 1–27 (MRERGPVTPAKSSAPPERPWTTGTAPG). A heme-binding site is contributed by C408.

This sequence belongs to the cytochrome P450 family. Heme serves as cofactor.

It carries out the reaction cyclooctat-9-en-7-ol + AH2 + O2 = cyclooctat-9-ene-5,7-diol + A + H2O. Its function is as follows. Involved in the biosynthesis of cyclooctatin, a potent inhibitor of lysophospholipase. Catalyzes the stereospecific hydroxylation of cyclooctat-9-en-7-ol to form cyclooctat-9-ene-5,7-diol. This chain is Cyclooctat-9-en-7-ol 5-monooxygenase, found in Streptomyces melanosporofaciens.